The following is a 403-amino-acid chain: Acetate kinase (403 aa).

Residue Asn7 participates in Mg(2+) binding. An ATP-binding site is contributed by Lys14. Substrate is bound at residue Arg97. The active-site Proton donor/acceptor is the Asp154. Residues 213 to 217 (HLGNG), 287 to 289 (DMR), and 335 to 339 (GIGEN) contribute to the ATP site. Residue Glu388 coordinates Mg(2+).

It belongs to the acetokinase family. As to quaternary structure, homodimer. Requires Mg(2+) as cofactor. Mn(2+) serves as cofactor.

It localises to the cytoplasm. It catalyses the reaction acetate + ATP = acetyl phosphate + ADP. It participates in metabolic intermediate biosynthesis; acetyl-CoA biosynthesis; acetyl-CoA from acetate: step 1/2. Catalyzes the formation of acetyl phosphate from acetate and ATP. Can also catalyze the reverse reaction. The protein is Acetate kinase of Synechococcus sp. (strain JA-2-3B'a(2-13)) (Cyanobacteria bacterium Yellowstone B-Prime).